A 185-amino-acid polypeptide reads, in one-letter code: Putative manganese efflux pump MntP (185 aa).

Helical transmembrane passes span 6 to 26 (IFII…ACGL), 41 to 61 (FHFG…GLTV), 65 to 85 (VETY…GKMI), 107 to 127 (LVFL…SFSI), 132 to 152 (IAFP…FGLW), and 164 to 184 (SHIA…KLLL).

The protein belongs to the MntP (TC 9.B.29) family.

The protein localises to the cell inner membrane. Its function is as follows. Probably functions as a manganese efflux pump. The polypeptide is Putative manganese efflux pump MntP (Maridesulfovibrio salexigens (strain ATCC 14822 / DSM 2638 / NCIMB 8403 / VKM B-1763) (Desulfovibrio salexigens)).